The chain runs to 624 residues: Probable Xaa-Pro aminopeptidase P (624 aa).

Residues Asp-414, Asp-425, Glu-530, and Glu-544 each contribute to the Mn(2+) site.

The protein belongs to the peptidase M24B family. The cofactor is Mn(2+).

It carries out the reaction Release of any N-terminal amino acid, including proline, that is linked to proline, even from a dipeptide or tripeptide.. Catalyzes the removal of a penultimate prolyl residue from the N-termini of peptides. This is Probable Xaa-Pro aminopeptidase P (AMPP) from Chaetomium globosum (strain ATCC 6205 / CBS 148.51 / DSM 1962 / NBRC 6347 / NRRL 1970) (Soil fungus).